The primary structure comprises 460 residues: Cysteine--tRNA ligase (460 aa).

Residue cysteine 28 coordinates Zn(2+). Residues 30-40 (MTVYDYCHLGH) carry the 'HIGH' region motif. Zn(2+) is bound by residues cysteine 209, histidine 234, and glutamate 238. The 'KMSKS' region motif lies at 266 to 270 (KMSKS). ATP is bound at residue lysine 269.

Belongs to the class-I aminoacyl-tRNA synthetase family. Monomer. The cofactor is Zn(2+).

Its subcellular location is the cytoplasm. The catalysed reaction is tRNA(Cys) + L-cysteine + ATP = L-cysteinyl-tRNA(Cys) + AMP + diphosphate. The chain is Cysteine--tRNA ligase from Pseudomonas putida (strain GB-1).